The chain runs to 27 residues: Putative phosphoglycerate kinase (27 aa).

The protein belongs to the phosphoglycerate kinase family. As to quaternary structure, monomer. Mg(2+) is required as a cofactor.

It catalyses the reaction (2R)-3-phosphoglycerate + ATP = (2R)-3-phospho-glyceroyl phosphate + ADP. This Pinus strobus (Eastern white pine) protein is Putative phosphoglycerate kinase.